The chain runs to 459 residues: Autophagy-related protein 18 (459 aa).

2 WD repeats span residues M1–S39 and A188–Q228. The interval F229–G232 is necessary for proper localization to vacuole membrane. A L/FRRG motif motif is present at residues F229 to T233. Residues T233–T272 form a WD 3 repeat. Residues L264 to L339 are disordered. A compositionally biased stretch (low complexity) spans G265–P277. Residues R285 to D296 are compositionally biased toward basic and acidic residues. Positions P319–R330 are enriched in gly residues. Residues A393–G433 form a WD 4 repeat.

It belongs to the WD repeat PROPPIN family. In terms of assembly, component of the PI(3,5)P2 regulatory complex. Interacts with ATG2 and ATG9. The ATG2-ATG18 complex is essential for autophagosome formation.

It is found in the preautophagosomal structure membrane. It localises to the vacuole membrane. The protein resides in the endosome membrane. Its function is as follows. Component of the PI(3,5)P2 regulatory complex that regulates both the synthesis and turnover of phosphatidylinositol 3,5-bisphosphate (PtdIns(3,5)P2). Plays an important role in osmotically-induced vacuole fragmentation. Required for cytoplasm to vacuole transport (Cvt) vesicle formation, pexophagy and starvation-induced autophagy. Involved in correct ATG9 trafficking to the pre-autophagosomal structure. With ATG2, protects ATG8 from ATG4-mediated cleavage. Autophagy is required for proper vegetative growth, asexual/sexual reproduction, and full virulence. Autophagy is particularly involved in the biosynthesis of deoxynivalenol (DON), an important virulence determinant. This is Autophagy-related protein 18 from Gibberella zeae (strain ATCC MYA-4620 / CBS 123657 / FGSC 9075 / NRRL 31084 / PH-1) (Wheat head blight fungus).